Here is a 440-residue protein sequence, read N- to C-terminus: Xaa-Pro dipeptidase (440 aa).

Residues Asp244, Asp255, His335, Glu380, and Glu419 each coordinate Mn(2+).

The protein belongs to the peptidase M24B family. Bacterial-type prolidase subfamily. It depends on Mn(2+) as a cofactor.

It catalyses the reaction Xaa-L-Pro dipeptide + H2O = an L-alpha-amino acid + L-proline. Functionally, splits dipeptides with a prolyl residue in the C-terminal position. This chain is Xaa-Pro dipeptidase, found in Shewanella piezotolerans (strain WP3 / JCM 13877).